We begin with the raw amino-acid sequence, 220 residues long: Iron-sulfur cluster repair protein YtfE (220 aa).

It belongs to the RIC family. YtfE subfamily. As to quaternary structure, homodimer.

Its subcellular location is the cytoplasm. Its function is as follows. Di-iron-containing protein involved in the repair of iron-sulfur clusters damaged by oxidative and nitrosative stress conditions. The protein is Iron-sulfur cluster repair protein YtfE of Escherichia coli O157:H7.